The chain runs to 227 residues: MPEVSTDDLDERQVQLMAEMCILVDENDRRIGAETKKNCHLNENIERGLLHRAFSVFLFNTENKLLLQQRSDAKITFPGCFTNTCCSHPLSNPSELEENDAIGVRRAAQRRLKAELGIPMEEVPPEEINYLTRIHYKAQSDSIWGEHEIDYILLVKKNVTLNPDPNEIKSYCYVTKEELEELIGKAAHGEIKITPWFQIIADTFLFKWWDNLNRLNLFVDHEKIHRM.

Lysine 36 lines the substrate pocket. Histidine 40 and histidine 51 together coordinate Mg(2+). The Nudix hydrolase domain occupies 49–199 (LLHRAFSVFL…EIKITPWFQI (151 aa)). The substrate site is built by arginine 70 and lysine 74. The Proton acceptor role is filled by cysteine 86. Serine 87 contributes to the substrate binding site. Mg(2+) contacts are provided by glutamate 146 and glutamate 148. Residue glutamate 148 is part of the active site. Residue lysine 176 is modified to N6-acetyllysine.

The protein belongs to the IPP isomerase type 1 family. In terms of assembly, monomer. The cofactor is Mg(2+).

The protein resides in the peroxisome. The catalysed reaction is isopentenyl diphosphate = dimethylallyl diphosphate. Its pathway is isoprenoid biosynthesis; dimethylallyl diphosphate biosynthesis; dimethylallyl diphosphate from isopentenyl diphosphate: step 1/1. Its function is as follows. Catalyzes the 1,3-allylic rearrangement of the homoallylic substrate isopentenyl (IPP) to its highly electrophilic allylic isomer, dimethylallyl diphosphate (DMAPP). This is Isopentenyl-diphosphate Delta-isomerase 1 (IDI1) from Bos taurus (Bovine).